The primary structure comprises 1226 residues: Methionine synthase (1226 aa).

In terms of domain architecture, Hcy-binding spans arginine 6 to valine 326. Zn(2+)-binding residues include cysteine 248, cysteine 311, and cysteine 312. Positions phenylalanine 357–glutamate 618 constitute a Pterin-binding domain. One can recognise a B12-binding N-terminal domain in the interval serine 651 to serine 745. Methylcob(III)alamin-binding positions include glutamate 695, glycine 757–aspartate 761, histidine 760, serine 805, threonine 809, and alanine 861. Positions asparagine 747–glutamate 882 constitute a B12-binding domain. Residues lysine 898 to glycine 1226 form the AdoMet activation domain. Residues aspartate 948, arginine 1136, and tyrosine 1191–phenylalanine 1192 contribute to the S-adenosyl-L-methionine site.

The protein belongs to the vitamin-B12 dependent methionine synthase family. Methylcob(III)alamin serves as cofactor. The cofactor is Zn(2+).

The catalysed reaction is (6S)-5-methyl-5,6,7,8-tetrahydrofolate + L-homocysteine = (6S)-5,6,7,8-tetrahydrofolate + L-methionine. The protein operates within amino-acid biosynthesis; L-methionine biosynthesis via de novo pathway; L-methionine from L-homocysteine (MetH route): step 1/1. Catalyzes the transfer of a methyl group from methyl-cobalamin to homocysteine, yielding enzyme-bound cob(I)alamin and methionine. Subsequently, remethylates the cofactor using methyltetrahydrofolate. The protein is Methionine synthase (metH) of Vibrio parahaemolyticus serotype O3:K6 (strain RIMD 2210633).